Reading from the N-terminus, the 271-residue chain is uncharacterized protein (271 aa).

Residues 1–22 (MIHSKRLKLCLCLIILSVFIGA) form the signal peptide. Residue Cys-23 is the site of N-palmitoyl cysteine attachment. A lipid anchor (S-diacylglycerol cysteine) is attached at Cys-23.

The protein belongs to the staphylococcal tandem lipoprotein family.

It is found in the cell membrane. This is an uncharacterized protein from Staphylococcus aureus (strain MW2).